Here is a 194-residue protein sequence, read N- to C-terminus: MSFAEKITGLLARPNQQDPIGPEQPWYLKYGSRLLGIVAAFFAILFGLWNVFSIITLSVSCLVAGILQMVAGFVVMLLEAPCCFVCFGQVNEIAEKVESKPLYFRAGLYIAMAIPPIILCFGLASLFGSGLIFGTGVVYGMMALGKKASAEDMRAAAQQTFGGNTPAQTNDRAGIVNNAQPFSFTGAVGTDSNV.

Residues methionine 1–leucine 34 lie on the Cytoplasmic side of the membrane. A helical transmembrane segment spans residues leucine 35–isoleucine 55. At threonine 56–glycine 65 the chain is on the extracellular side. Residues isoleucine 66–glycine 88 form a helical membrane-spanning segment. Over glutamine 89–alanine 106 the chain is Cytoplasmic. The helical transmembrane segment at glycine 107–phenylalanine 127 threads the bilayer. Topologically, residues glycine 128–valine 194 are extracellular. Important for promoting apoptosis regions lie at residues threonine 135–alanine 157 and threonine 135–serine 192.

The protein belongs to the calcium channel flower family. Associates with the dally/ magu complex. In terms of assembly, homomultimer. Associates with the dally/ magu complex. Detected in the imaginal wing disk (at protein level). As to expression, detected throughout the adult brain, including the optic lobe but, at much lower levels of expression than isoform Lose-A. In terms of tissue distribution, detected in the optic lobe (at protein level). Detected throughout the adult brain, including the optic lobe. Expressed in damaged and undamaged optic lobe neurons. Expressed in optic lobe neurons, with higher levels of expression in suboptimal neurons. Specifically expressed in injury-damaged optic lobe neurons.

It is found in the cell membrane. Its subcellular location is the cytoplasmic vesicle. The protein resides in the secretory vesicle. It localises to the synaptic vesicle membrane. The protein localises to the presynaptic cell membrane. It is found in the endosome. Its subcellular location is the synaptic vesicle. With respect to regulation, channel activity is inhibited by La(3+), which reduces Ca(2+) influx and thus inhibits it's function in promoting activity-dependent bulk endocytosis (ADBE) in response to high stimuli. Functionally, transmembrane protein which mediates synaptic endocytosis, fitness-based cell culling, neuronal culling, morphogen gradient scaling, and calcium transport. Regulates synaptic endocytosis and hence couples exo- with endocytosis. Controls two major modes of synaptic vesicle (SV) endocytosis in the synaptic boutons of neuromuscular junctions (NMJs); Ca(2+) channel-independent Clathrin-mediated endocytosis (CME) in response to mild stimulation, and Ca(2+) channel-dependent activity-dependent bulk endocytosis (ADBE) in response to strong stimulation. Functions in ADBE and subsequent SV reformation from bulk endosomes by initiating Ca(2+) channel-dependent phosphatidylinositol 4,5-bisphosphate (PtdIns(4,5)P2) compartmentalization in synaptic boutons. There it acts at the periactive zone to provide the low Ca(2+) levels required to initiate Calcineurin activation and upregulate PtdIns(4,5)P2. Conversely PtdIns(4,5)P2 enhances fwe Ca(2+) channel-activity, establishing a positive feedback loop that induces PtdIns(4,5)P2 microdomain at the periactive zone. These microdomains trigger bulk membrane invagination (i.e. ADBE) by triggering actin polymerization while also promoting localization of fwe to bulk endosomes, thereby removing the ADBE trigger to reduce endocytosis and prevent excess membrane uptake. PtdIns(4,5)P2 then promotes SV reformation from the bulk endosomes, to coordinate ADBE and subsequent SV reformation. Different combinations of the flower isoforms at the cell membrane are also required for the identification and elimination of suboptimal or supernumerary cells during development, regeneration, and adulthood. Required for the recognition and elimination of unfit cells in the developing wing during cell competition. Also required for efficient identification and elimination of injured, damaged and/or dysfunctional neurons during regeneration of the adult brain. In the developing pupal retina, mediates the elimination of unwanted postmitotic neurons, including supernumerary photoreceptor neurons that form at the periphery of the retina and are contained within incomplete ommatidia units. Downstream of the flower fitness fingerprints, cells identified as unwanted or unfit are eliminated via apoptosis through the expression of ahuizotl (azot). However, the cells marked for elimination by the flower isoforms only undergo apoptosis if additional thresholds are met; (1) their neighboring fit/healthy cells express different levels of the fwe isoforms, and (2) the levels of the protective signal SPARC expressed by the loser or unwanted cells are unable to inhibit caspase activation. These additional thresholds for flower-mediated apoptosis, allows useful cells to recover from transient and limited stress before they are unnecessarily eliminated. Functions with dally and magu in a mechanism of scaling, which utilises apoptosis to ensure that the dpp morphogen gradient, which mediates organ growth, remains proportional to the size of the growing wing. In this mechanism, fwe represses dally- and Magu-dependent activity in expanding the gradient, and dally/Magu inhibits fwe-dependent apoptosis to keep cell death rate low. When the levels of these different proteins are optimally regulated the gradient correctly scales with organ growth but when this fails, fwe-mediated apoptosis is activated to trim the developing tissue to match the correct size of the gradient. Functions with the other flower isoforms to produce tissue-specific fitness fingerprints that identify unfit or fit cells during cell selection processes in order to maintain tissue health. In the wing imaginal disk, this isoform is highly expressed in healthy/normal cells but is down-regulated in cells with decreased fitness. During cell competition, if levels of this isoform in unfit cells is lower than in the surrounding neighboring cells, the suboptimal cells are recognized as 'loser' cells, and undergo elimination via apoptosis to be replaced by the surrounding healthy 'winner' cell population. In terms of biological role, functions with the other flower isoforms to produce tissue-specific fitness fingerprints that identify unfit or fit cells during cell selection processes in order to maintain tissue health. In the wing imaginal disk, this isoform displays low levels of expression in healthy/normal cells but is up-regulated in cells with decreased fitness. During cell competition, if levels of this isoform in unfit cells is higher than in the surrounding neighboring cells, the suboptimal cells are recognized as 'loser' cells, and undergo elimination via apoptosis to be replaced by the surrounding healthy 'winner' cell population. Its function is as follows. Functions with the other flower isoforms to produce tissue-specific fitness fingerprints that identify unfit cells for cell selection processes during development, regeneration, and to maintain tissue health. During cell competition in certain tissues, marks suboptimal or damaged cells as 'loser' cells. In cells of the wing imaginal disk and damaged or dysfunctional neurons in the adult optic lobe, this isoform displays low to no expression in healthy/normal cells but is up-regulated in cells with decreased fitness or damage-affected neurons. During cell competition, if levels of this isoform in unfit cells is higher than in the surrounding neighboring cells, the suboptimal cells are recognized as 'loser' cells, and undergo elimination via apoptosis to be replaced by the surrounding healthy/undamaged 'winner' cell population. In the developing pupal retina, also required for the recognition and elimination of postmitotic neurons, including supernumerary photoreceptor neurons that form at the periphery of the retina and are contained within incomplete ommatidia units. Activity at the peripheral retina is induced by the wg signaling pathway but, once activated, it promotes apoptosis of supernumerary photoreceptor neurons independently of wg signaling and snail function. In Drosophila melanogaster (Fruit fly), this protein is Calcium channel flower (fwe).